Consider the following 335-residue polypeptide: GTPase Obg (335 aa).

The Obg domain maps to M1 to I158. The region spanning A159–A334 is the OBG-type G domain. GTP is bound by residues G165–S172, F190–Q194, D215–G218, N285–D288, and S315–L317. S172 and T192 together coordinate Mg(2+).

Belongs to the TRAFAC class OBG-HflX-like GTPase superfamily. OBG GTPase family. In terms of assembly, monomer. It depends on Mg(2+) as a cofactor.

It is found in the cytoplasm. In terms of biological role, an essential GTPase (4.1 pmol GTP/min). Cannot substitute endogenous obg in E.coli, has a partially dominant-negative phenotype upon overexpression in liquid culture leading to decreased growth rate in a concentration-dependent fashion, with 50% of cells being elongated. Binds GTP, GDP and possibly (p)ppGpp with moderate affinity, with high nucleotide exchange rates and a fairly low GTP hydrolysis rate. It may play a role in control of the cell cycle, stress response, ribosome biogenesis and in those bacteria that undergo differentiation, in morphogenesis control. The protein is GTPase Obg of Chlamydia abortus (strain DSM 27085 / S26/3) (Chlamydophila abortus).